A 150-amino-acid polypeptide reads, in one-letter code: Large ribosomal subunit protein uL13 (150 aa).

Belongs to the universal ribosomal protein uL13 family. In terms of assembly, part of the 50S ribosomal subunit.

This protein is one of the early assembly proteins of the 50S ribosomal subunit, although it is not seen to bind rRNA by itself. It is important during the early stages of 50S assembly. This Chlamydia abortus (strain DSM 27085 / S26/3) (Chlamydophila abortus) protein is Large ribosomal subunit protein uL13.